The primary structure comprises 300 residues: Protoheme IX farnesyltransferase 1 (300 aa).

The next 8 membrane-spanning stretches (helical) occupy residues 26 to 46 (VVVL…RAGV), 48 to 68 (WTVL…AAAV), 97 to 117 (AALA…LTFT), 120 to 140 (LTAW…TGFL), 148 to 168 (IVIG…AATG), 174 to 194 (PLLL…ALAI), 226 to 246 (FALL…VLYL), and 280 to 300 (IYYL…LLNL).

This sequence belongs to the UbiA prenyltransferase family. Protoheme IX farnesyltransferase subfamily.

It is found in the cell inner membrane. The catalysed reaction is heme b + (2E,6E)-farnesyl diphosphate + H2O = Fe(II)-heme o + diphosphate. Its pathway is porphyrin-containing compound metabolism; heme O biosynthesis; heme O from protoheme: step 1/1. Functionally, converts heme B (protoheme IX) to heme O by substitution of the vinyl group on carbon 2 of heme B porphyrin ring with a hydroxyethyl farnesyl side group. This is Protoheme IX farnesyltransferase 1 from Pseudomonas fluorescens (strain ATCC BAA-477 / NRRL B-23932 / Pf-5).